The sequence spans 83 residues: MYB-like transcription factor ETC1 (83 aa).

In terms of domain architecture, Myb-like spans 35–72 (AQEEEDLICRMYKLVGERWDLIAGRIPGRTAEEIERFW).

In terms of tissue distribution, expressed in developing trichomes and non-root hair cells.

The protein localises to the nucleus. MYB-type transcription factor involved in epidermal cell fate specification. Acts as a negative regulator of trichome development, by mediating lateral inhibition. Promotes the formation of hair developing cells in H position in root epidermis, probably by inhibiting non-hair cell formation. The sequence is that of MYB-like transcription factor ETC1 (ETC1) from Arabidopsis thaliana (Mouse-ear cress).